We begin with the raw amino-acid sequence, 661 residues long: Translation factor GUF1 homolog, mitochondrial (661 aa).

The region spanning 59–242 is the tr-type G domain; sequence ENIRNFCIVA…AIIDRIPSPK (184 aa). Residues 68–75, 135–139, and 189–192 contribute to the GTP site; these read AHVDHGKS, DTPGH, and NKVD.

The protein belongs to the TRAFAC class translation factor GTPase superfamily. Classic translation factor GTPase family. LepA subfamily.

Its subcellular location is the mitochondrion inner membrane. It carries out the reaction GTP + H2O = GDP + phosphate + H(+). Functionally, promotes mitochondrial protein synthesis. May act as a fidelity factor of the translation reaction, by catalyzing a one-codon backward translocation of tRNAs on improperly translocated ribosomes. Binds to mitochondrial ribosomes in a GTP-dependent manner. The sequence is that of Translation factor GUF1 homolog, mitochondrial from Ixodes scapularis (Black-legged tick).